The following is a 216-amino-acid chain: Phosducin-like protein 3 (216 aa).

A coiled-coil region spans residues 13-59 (AKTIEQQLDQQLDRLDNLDSDDLKVLREQRLREMKDLNNKKQEWLRN). A Phosducin domain is found at 29-163 (NLDSDDLKVL…DLGNCDDFAT (135 aa)).

The protein belongs to the phosducin family. As to expression, highly expressed in germline cells of the testis from the spermatogonia stage until the early spermatid stage but is no longer observed in late-stage spermatids in the distal end of the testis.

It carries out the reaction [thioredoxin]-dithiol + NADP(+) = [thioredoxin]-disulfide + NADPH + H(+). Its function is as follows. Has redox activity with thioredoxin. Required for male fertility and maturation of sperm past the canoe stage during spermiogenesis. The sequence is that of Phosducin-like protein 3 from Drosophila melanogaster (Fruit fly).